Here is a 296-residue protein sequence, read N- to C-terminus: Probable AP endonuclease (296 aa).

Cysteine 16 and cysteine 20 form a disulfide bridge. 8 residues coordinate Zn(2+): histidine 78, histidine 115, glutamate 142, histidine 182, histidine 218, aspartate 231, histidine 233, and glutamate 271.

It belongs to the AP endonuclease 2 family. Requires Zn(2+) as cofactor.

The protein localises to the host nucleus. It is found in the host cytoplasm. Its subcellular location is the virion. Its function is as follows. Endonuclease that plays a role in DNA repair. Cleaves phosphodiester bonds on the 5' side of apurinic or apyrimidinic sites (AP sites). In addition to endonuclease activity, the ASFV enzyme has a proofreading 3'-5' exonuclease activity that is considerably more efficient in the elimination of a mismatch than in that of a correctly paired base. Displays 3'-phosphatase and 3'-repair diesterase activities. The single nucleotide gaps generated by the AP endonuclease are filled by the viral AP endonuclease and DNA ligase. This Ornithodoros (relapsing fever ticks) protein is Probable AP endonuclease.